Reading from the N-terminus, the 560-residue chain is Membrane protein insertase YidC (560 aa).

6 helical membrane passes run 5 to 25 (IINL…WQYF), 334 to 354 (AIDF…MNFF), 357 to 377 (YVGN…LLMF), 431 to 451 (LPIL…YVTI), 476 to 496 (LFGL…WPIL), and 522 to 542 (FMPL…LIYW).

Belongs to the OXA1/ALB3/YidC family. Type 1 subfamily. Interacts with the Sec translocase complex via SecD. Specifically interacts with transmembrane segments of nascent integral membrane proteins during membrane integration.

The protein localises to the cell inner membrane. Required for the insertion and/or proper folding and/or complex formation of integral membrane proteins into the membrane. Involved in integration of membrane proteins that insert both dependently and independently of the Sec translocase complex, as well as at least some lipoproteins. Aids folding of multispanning membrane proteins. The sequence is that of Membrane protein insertase YidC from Rickettsia conorii (strain ATCC VR-613 / Malish 7).